The sequence spans 365 residues: Pre-small/secreted glycoprotein (365 aa).

A signal peptide spans 1-32; it reads MGASGILQLPRERFRKTSFFVWVIILFHKVFS. The N-linked (GlcNAc...) asparagine; by host glycan is linked to Asn40. Cystine bridges form between Cys108/Cys135 and Cys121/Cys147. 4 N-linked (GlcNAc...) asparagine; by host glycosylation sites follow: Asn204, Asn228, Asn257, and Asn268.

This sequence belongs to the filoviruses glycoprotein family. As to quaternary structure, homodimer; disulfide-linked. The homodimers are linked by two disulfide bonds in a parallel orientation. Monomer. This precursor is processed into mature sGP and delta-peptide by host furin or furin-like proteases. The cleavage site corresponds to the furin optimal cleavage sequence [KR]-X-[KR]-R. Post-translationally, N-glycosylated. In terms of processing, O-glycosylated.

The protein resides in the secreted. Functionally, seems to possess an anti-inflammatory activity as it can reverse the barrier-decreasing effects of TNF alpha. Might therefore contribute to the lack of inflammatory reaction seen during infection in spite the of extensive necrosis and massive virus production. Does not seem to be involved in activation of primary macrophages. Does not seem to interact specifically with neutrophils. Its function is as follows. Viroporin that permeabilizes mammalian cell plasma membranes. It acts by altering permeation of ionic compounds and small molecules. This activity may lead to viral enterotoxic activity. The chain is Pre-small/secreted glycoprotein (GP) from Epomops franqueti (Franquet's epauletted fruit bat).